The sequence spans 852 residues: Alanine--tRNA ligase (852 aa).

His554, His558, Cys656, and His660 together coordinate Zn(2+).

It belongs to the class-II aminoacyl-tRNA synthetase family. Requires Zn(2+) as cofactor.

The protein resides in the cytoplasm. The enzyme catalyses tRNA(Ala) + L-alanine + ATP = L-alanyl-tRNA(Ala) + AMP + diphosphate. In terms of biological role, catalyzes the attachment of alanine to tRNA(Ala) in a two-step reaction: alanine is first activated by ATP to form Ala-AMP and then transferred to the acceptor end of tRNA(Ala). Also edits incorrectly charged Ser-tRNA(Ala) and Gly-tRNA(Ala) via its editing domain. The chain is Alanine--tRNA ligase from Campylobacter curvus (strain 525.92).